An 813-amino-acid chain; its full sequence is Immunoglobulin superfamily DCC subclass member 3 (813 aa).

The segment at 1–21 (MAEPRTASPRRLPALRRPGFL) is disordered. An N-terminal signal peptide occupies residues 1–47 (MAEPRTASPRRLPALRRPGFLPPLLPPPPPPLLLLLLLLPLPAPSLG). Positions 9–19 (PRRLPALRRPG) are enriched in low complexity. Ig-like C2-type domains are found at residues 49–151 (GHSA…ATMS), 151–232 (SDFH…VRVS), 250–333 (PTIL…RTAQ), and 341–428 (PAEF…ARLT). 2 disulfide bridges follow: Cys-75–Cys-129 and Cys-172–Cys-221. N-linked (GlcNAc...) asparagine glycosylation is present at Asn-105. Asn-258 carries N-linked (GlcNAc...) asparagine glycosylation. Intrachain disulfides connect Cys-271/Cys-319 and Cys-363/Cys-412. N-linked (GlcNAc...) asparagine glycans are attached at residues Asn-393 and Asn-394. 2 consecutive Fibronectin type-III domains span residues 438-532 (PPRN…TLGE) and 535-630 (VPPP…ASER). 3 N-linked (GlcNAc...) asparagine glycosylation sites follow: Asn-592, Asn-616, and Asn-646. Residues 653–673 (IVIGIHIGVTCIIFCVLFLLF) traverse the membrane as a helical segment. Disordered regions lie at residues 689–724 (LSPP…EKPV) and 775–813 (TTEA…AAPQ).

The protein belongs to the immunoglobulin superfamily. DCC family. In terms of tissue distribution, detected in cerebellum, kidney, heart, lung, skeletal muscle and spleen.

It is found in the membrane. This Mus musculus (Mouse) protein is Immunoglobulin superfamily DCC subclass member 3 (Igdcc3).